The following is a 1102-amino-acid chain: Voltage-gated delayed rectifier potassium channel KCNH8 (1102 aa).

At 1-225 (MPVMKGLLAP…HFSTFKAGWD (225 aa)) the chain is on the cytoplasmic side. A PAS domain is found at 18 to 90 (IATRFDGTHS…LQIEKSLEEK (73 aa)). The PAC domain occupies 93-145 (FKGEIMFYKKNGAPFWCLLDIVPIKNEKGDVVLFLASFKDITDTKVKITSEDK). The span at 142–151 (SEDKKEDRTK) shows a compositional bias: basic and acidic residues. A disordered region spans residues 142–162 (SEDKKEDRTKGRSRAGSHFDS). Residues 226-246 (WLILLATFYVAVTVPYNVCFI) traverse the membrane as a helical segment. The Extracellular segment spans residues 247-255 (GNEDLSTTR). A helical membrane pass occupies residues 256–276 (STTVSDIAVEILFIIDIILNF). Residues 277–298 (RTTYVSKSGQVIFEARSICIHY) are Cytoplasmic-facing. The helical transmembrane segment at 299–319 (VTTWFIIDLIAALPFDLLYAF) threads the bilayer. An N-linked (GlcNAc...) asparagine glycan is attached at Asn320. Topologically, residues 320–327 (NVTVVSLV) are extracellular. A helical; Voltage-sensor transmembrane segment spans residues 328 to 348 (HLLKTVRLLRLLRLLQKLDRY). The Cytoplasmic segment spans residues 349–357 (SQHSTIVLT). Residues 358-378 (LLMSMFALLAHWMACIWYVIG) form a helical membrane-spanning segment. At 379 to 419 (KMEREDNSLLKWEVGWLHELGKRLESPYYGNNTLGGPSIRS) the chain is on the extracellular side. Residue Asn409 is glycosylated (N-linked (GlcNAc...) asparagine). The pore-forming intramembrane region spans 420 to 440 (AYIAALYFTLSSLTSVGFGNV). The short motif at 434 to 439 (SVGFGN) is the Selectivity filter element. The Extracellular portion of the chain corresponds to 441–448 (SANTDAEK). The helical transmembrane segment at 449–469 (IFSICTMLIGALMHALVFGNV) threads the bilayer. Residues 470 to 1102 (TAIIQRMYSR…DVKDSKAINV (633 aa)) lie on the Cytoplasmic side of the membrane. The segment at 551-668 (LFECASRGCL…HKFVEDIQHD (118 aa)) is cNMP-binding domain. Residues 684-693 (RLSNKSTVSQ) show a composition bias toward polar residues. Disordered stretches follow at residues 684-743 (RLSN…KKTG), 764-841 (HSPI…PEPR), and 960-991 (LVGS…YSPS). Acidic residues predominate over residues 710 to 723 (VEDEEEEEVEEEET). The segment covering 724-737 (TSLSPIYTRGSSVS) has biased composition (polar residues). Basic and acidic residues predominate over residues 968–984 (TEAHEQNPADSELHHSP).

The protein belongs to the potassium channel family. H (Eag) (TC 1.A.1.20) subfamily. Kv12.1/KCNH8 sub-subfamily. The potassium channel is probably composed of a homo- or heterotetrameric complex of pore-forming alpha subunits that can associate with modulating beta subunits.

Its subcellular location is the membrane. It carries out the reaction K(+)(in) = K(+)(out). Pore-forming (alpha) subunit of a voltage-gated delayed rectifier potassium channel that mediates outward-rectifying potassium currents. Elicits a slowly activating, non-inactivating and slowly deactivation outwards potassium current at depolarizating voltages from -30 mV to +50mV. Shows no obvious change in the activation rate from different holding potentials. Activation is strongly dependent on the pH of the external solution. This chain is Voltage-gated delayed rectifier potassium channel KCNH8, found in Mus musculus (Mouse).